A 205-amino-acid chain; its full sequence is DUF724 domain-containing protein 4 (205 aa).

The interval 28–59 (DASGRGKRRRVEQEHHSDLNNETAAPTGGSAG) is disordered. In terms of domain architecture, DUF724 spans 63–189 (VLPFTKTLAS…MADDYSKLKK (127 aa)).

Expressed in roots, leaves, stems, flowers and siliques.

The protein localises to the nucleus. Functionally, may be involved in the polar growth of plant cells via transportation of RNAs. The chain is DUF724 domain-containing protein 4 from Arabidopsis thaliana (Mouse-ear cress).